A 95-amino-acid polypeptide reads, in one-letter code: Small ribosomal subunit protein bS6 (95 aa).

The protein belongs to the bacterial ribosomal protein bS6 family.

Binds together with bS18 to 16S ribosomal RNA. This Caldanaerobacter subterraneus subsp. tengcongensis (strain DSM 15242 / JCM 11007 / NBRC 100824 / MB4) (Thermoanaerobacter tengcongensis) protein is Small ribosomal subunit protein bS6.